A 347-amino-acid polypeptide reads, in one-letter code: MNPLIFTMIMLTVILGTTIVMMSSHWLMIWMGFEMNMLAVIPLLMKQYNPRSMEAATKYFLTQATASMLLMLAVIINLLYSGQWTFTKLMNPTASIIMTLALGMKMGLAPFHFWVPEVTQGISLSSGLILLTWQKLAPLSVLYVISPAINLDLILLMSMMSIAIGGWGGLNQTQLRKILAYSSIAHMGWMASILVFNPTMTLLNLLLYILMTTTTFMLFMVASATTTLSLSHMWNKMPLITTSTLTIMLSLGGLPPLTGFLPKWMIIQELTKNNNITLATLMAITALLNLFFYMRLTYATSLTMFPTTNNMKMKWQFNNKKQLKCLPVLIILSTITLPLAPAITLLN.

11 consecutive transmembrane segments (helical) span residues Pro-3 to Ser-23, His-25 to Met-45, Tyr-59 to Leu-79, Ile-96 to Pro-116, Ile-122 to Val-144, Ile-149 to Asn-171, Ile-178 to Pro-198, Leu-202 to Ala-222, Ile-247 to Ile-267, Ile-276 to Leu-296, and Leu-326 to Leu-346.

This sequence belongs to the complex I subunit 2 family. Core subunit of respiratory chain NADH dehydrogenase (Complex I) which is composed of 45 different subunits. Interacts with TMEM242.

The protein resides in the mitochondrion inner membrane. The enzyme catalyses a ubiquinone + NADH + 5 H(+)(in) = a ubiquinol + NAD(+) + 4 H(+)(out). Functionally, core subunit of the mitochondrial membrane respiratory chain NADH dehydrogenase (Complex I) which catalyzes electron transfer from NADH through the respiratory chain, using ubiquinone as an electron acceptor. Essential for the catalytic activity and assembly of complex I. The chain is NADH-ubiquinone oxidoreductase chain 2 from Saccopteryx bilineata (Greater white-lined bat).